Consider the following 394-residue polypeptide: Quinolinate synthase (394 aa).

Iminosuccinate-binding residues include histidine 67 and serine 84. A [4Fe-4S] cluster-binding site is contributed by cysteine 131. Residues 163–165 and serine 184 contribute to the iminosuccinate site; that span reads YMN. Cysteine 254 serves as a coordination point for [4Fe-4S] cluster. Iminosuccinate-binding positions include 280-282 and threonine 297; that span reads HPE. Cysteine 346 provides a ligand contact to [4Fe-4S] cluster.

It belongs to the quinolinate synthase family. Type 3 subfamily. The cofactor is [4Fe-4S] cluster.

It is found in the cytoplasm. It catalyses the reaction iminosuccinate + dihydroxyacetone phosphate = quinolinate + phosphate + 2 H2O + H(+). The protein operates within cofactor biosynthesis; NAD(+) biosynthesis; quinolinate from iminoaspartate: step 1/1. Its function is as follows. Catalyzes the condensation of iminoaspartate with dihydroxyacetone phosphate to form quinolinate. This is Quinolinate synthase from Streptomyces coelicolor (strain ATCC BAA-471 / A3(2) / M145).